The following is a 589-amino-acid chain: Aspartate--tRNA ligase (589 aa).

Residue glutamate 172 coordinates L-aspartate. The interval 196 to 199 (QLFK) is aspartate. Arginine 218 provides a ligand contact to L-aspartate. ATP is bound by residues 218–220 (RDE) and glutamine 227. Histidine 449 is a binding site for L-aspartate. Glutamate 483 is a binding site for ATP. Position 490 (arginine 490) interacts with L-aspartate. 535-538 (GLDR) lines the ATP pocket.

This sequence belongs to the class-II aminoacyl-tRNA synthetase family. Type 1 subfamily. As to quaternary structure, homodimer.

It is found in the cytoplasm. It catalyses the reaction tRNA(Asp) + L-aspartate + ATP = L-aspartyl-tRNA(Asp) + AMP + diphosphate. Functionally, catalyzes the attachment of L-aspartate to tRNA(Asp) in a two-step reaction: L-aspartate is first activated by ATP to form Asp-AMP and then transferred to the acceptor end of tRNA(Asp). In Haemophilus ducreyi (strain 35000HP / ATCC 700724), this protein is Aspartate--tRNA ligase.